We begin with the raw amino-acid sequence, 47 residues long: Delta-actitoxin-Aspp1a (47 aa).

3 disulfides stabilise this stretch: C4–C44, C6–C34, and C27–C45.

The protein belongs to the sea anemone sodium channel inhibitory toxin family. Type I subfamily.

Its subcellular location is the secreted. It is found in the nematocyst. Its function is as follows. Binds specifically to voltage-gated sodium channels (Nav) (site 3), thereby delaying their inactivation during signal transduction. Has a heart stimulation effect on isolated rat atria that is higher than that of Hk7a, Hk8a and Hk16a. This Anthopleura sp. (strain 'Zhanjiang') (Sea anemone) protein is Delta-actitoxin-Aspp1a.